The sequence spans 428 residues: Enolase (428 aa).

Gln-163 is a (2R)-2-phosphoglycerate binding site. Residue Glu-205 is the Proton donor of the active site. Asp-242, Glu-286, and Asp-313 together coordinate Mg(2+). (2R)-2-phosphoglycerate is bound by residues Lys-338, Arg-367, Ser-368, and Lys-389. The active-site Proton acceptor is Lys-338.

The protein belongs to the enolase family. It depends on Mg(2+) as a cofactor.

The protein localises to the cytoplasm. Its subcellular location is the secreted. It localises to the cell surface. It catalyses the reaction (2R)-2-phosphoglycerate = phosphoenolpyruvate + H2O. The protein operates within carbohydrate degradation; glycolysis; pyruvate from D-glyceraldehyde 3-phosphate: step 4/5. In terms of biological role, catalyzes the reversible conversion of 2-phosphoglycerate (2-PG) into phosphoenolpyruvate (PEP). It is essential for the degradation of carbohydrates via glycolysis. The protein is Enolase of Acidovorax ebreus (strain TPSY) (Diaphorobacter sp. (strain TPSY)).